Consider the following 357-residue polypeptide: UDP-N-acetylglucosamine--N-acetylmuramyl-(pentapeptide) pyrophosphoryl-undecaprenol N-acetylglucosamine transferase (357 aa).

UDP-N-acetyl-alpha-D-glucosamine-binding positions include 12-14 (TGG), Asn-124, Arg-163, Ser-189, Ile-243, 262-267 (ALTVSE), and Gln-288.

This sequence belongs to the glycosyltransferase 28 family. MurG subfamily.

It localises to the cell inner membrane. The catalysed reaction is di-trans,octa-cis-undecaprenyl diphospho-N-acetyl-alpha-D-muramoyl-L-alanyl-D-glutamyl-meso-2,6-diaminopimeloyl-D-alanyl-D-alanine + UDP-N-acetyl-alpha-D-glucosamine = di-trans,octa-cis-undecaprenyl diphospho-[N-acetyl-alpha-D-glucosaminyl-(1-&gt;4)]-N-acetyl-alpha-D-muramoyl-L-alanyl-D-glutamyl-meso-2,6-diaminopimeloyl-D-alanyl-D-alanine + UDP + H(+). Its pathway is cell wall biogenesis; peptidoglycan biosynthesis. Functionally, cell wall formation. Catalyzes the transfer of a GlcNAc subunit on undecaprenyl-pyrophosphoryl-MurNAc-pentapeptide (lipid intermediate I) to form undecaprenyl-pyrophosphoryl-MurNAc-(pentapeptide)GlcNAc (lipid intermediate II). The polypeptide is UDP-N-acetylglucosamine--N-acetylmuramyl-(pentapeptide) pyrophosphoryl-undecaprenol N-acetylglucosamine transferase (Pseudomonas paraeruginosa (strain DSM 24068 / PA7) (Pseudomonas aeruginosa (strain PA7))).